A 236-amino-acid polypeptide reads, in one-letter code: Small ribosomal subunit protein uS2c (236 aa).

The protein belongs to the universal ribosomal protein uS2 family.

It localises to the plastid. The protein localises to the chloroplast. This chain is Small ribosomal subunit protein uS2c (rps2), found in Draba nemorosa (Woodland whitlowgrass).